The primary structure comprises 139 residues: Spermatogenesis-associated protein 33 (139 aa).

Residues 1 to 67 form an interaction with ATG16L1 region; that stretch reads MVTHAAGART…TAKHPPPAAS (67 aa). A disordered region spans residues 1 to 83; the sequence is MVTHAAGART…VKQKSSRKKV (83 aa). Residues 25–50 are compositionally biased toward basic and acidic residues; it reads KSKEKLMEKHSQEARQADRESEKPVD. The interaction with VDAC2 stretch occupies residues 68-139; that stretch reads LEEKPDVKQK…ADAYNSHLKE (72 aa). The PQIIIT motif lies at 86 to 91; the sequence is PQIIIT. Ser-94 is subject to Phosphoserine. A compositionally biased stretch (polar residues) spans 97–109; the sequence is TLVSCSSSGSDQQ. The segment at 97–139 is disordered; that stretch reads TLVSCSSSGSDQQRTIREPEDWGPYRRHRNPSTADAYNSHLKE. The span at 110 to 120 shows a compositional bias: basic and acidic residues; it reads RTIREPEDWGP.

In terms of assembly, interacts (via PQIIIT motif) with PPP3R1, PPP3R2, PPP3CA, PPP3CB and PPP3CC. Interacts with VDAC2. Interacts with ATG16L1 (via WD repeats).

The protein resides in the cytoplasm. It is found in the cytosol. The protein localises to the nucleus. It localises to the mitochondrion. Its function is as follows. Plays an important role in sperm motility and male fertility. Required for sperm midpiece flexibility and for the localization of sperm calcineurin to the mitochondria. Promotes mitophagy as well as acts as an autophagy mediator in male germline cells. Links damaged mitochondria to autophagosomes via its binding to the outer mitochondrial membrane protein VDAC2, as well as to key autophagy machinery component ATG16L1. The sequence is that of Spermatogenesis-associated protein 33 (SPATA33) from Homo sapiens (Human).